The primary structure comprises 296 residues: Probable GTP 3',8-cyclase (296 aa).

The region spanning 5 to 230 (EYGRVVTNLR…HRRTQYFTPK (226 aa)) is the Radical SAM core domain. Position 14 (Arg14) interacts with GTP. [4Fe-4S] cluster-binding residues include Cys21 and Cys25. Tyr27 lines the S-adenosyl-L-methionine pocket. A [4Fe-4S] cluster-binding site is contributed by Cys28. Lys61 contributes to the GTP binding site. Residue Gly65 coordinates S-adenosyl-L-methionine. Residue Thr89 coordinates GTP. Residue Ser113 participates in S-adenosyl-L-methionine binding. Lys150 lines the GTP pocket. The [4Fe-4S] cluster site is built by Cys245 and Cys248. Residue 250-252 (RMR) participates in GTP binding. Cys262 lines the [4Fe-4S] cluster pocket.

This sequence belongs to the radical SAM superfamily. MoaA family. It depends on [4Fe-4S] cluster as a cofactor.

It carries out the reaction GTP + AH2 + S-adenosyl-L-methionine = (8S)-3',8-cyclo-7,8-dihydroguanosine 5'-triphosphate + 5'-deoxyadenosine + L-methionine + A + H(+). It participates in cofactor biosynthesis; molybdopterin biosynthesis. Its function is as follows. Catalyzes the cyclization of GTP to (8S)-3',8-cyclo-7,8-dihydroguanosine 5'-triphosphate. The protein is Probable GTP 3',8-cyclase of Archaeoglobus fulgidus (strain ATCC 49558 / DSM 4304 / JCM 9628 / NBRC 100126 / VC-16).